A 261-amino-acid polypeptide reads, in one-letter code: Putative carbamate hydrolase RutD (261 aa).

An AB hydrolase-1 domain is found at 14-119 (PTILLSSGLG…LINAWSKADP (106 aa)).

Belongs to the AB hydrolase superfamily. Hydrolase RutD family.

It catalyses the reaction carbamate + 2 H(+) = NH4(+) + CO2. Involved in pyrimidine catabolism. May facilitate the hydrolysis of carbamate, a reaction that can also occur spontaneously. The polypeptide is Putative carbamate hydrolase RutD (Agrobacterium fabrum (strain C58 / ATCC 33970) (Agrobacterium tumefaciens (strain C58))).